The primary structure comprises 107 residues: Multidrug resistance protein mmr (107 aa).

A run of 4 helical transmembrane segments spans residues 2–19, 29–51, 58–80, and 84–106; these read IYLYLLCAIFAEVVATSL, LWPTVGCLVGYGIAFALLALSIS, VAYALWSAIGTAAIVLVAVLFLG, and SVMKVVGVGLIVVGVVTLNLAGA.

Belongs to the drug/metabolite transporter (DMT) superfamily. Small multidrug resistance (SMR) (TC 2.A.7.1) family. Mmr subfamily.

The protein localises to the cell membrane. Functionally, multidrug efflux pump. Confers resistance to tetraphenylphosphonium (TPP), erythromycin, ethidium bromide, acriflavine, safranin O and pyronin Y. In Mycobacterium bovis (strain ATCC BAA-935 / AF2122/97), this protein is Multidrug resistance protein mmr (mmr).